Here is a 234-residue protein sequence, read N- to C-terminus: MRLYQLSPQSLQFPDPNHALDNPNGLLAVGGDLSVARLKVAYRQGIFPWFSPGEPILWWSPNPRAVLLPGELHLSRSMKKFLKRHTFHATLNQAFDDVIHACAQEHHDGTWITPDIISAYRQLHQVGKAHSVEVWHNGALVGGLYGIEQGRLFCGESMFSRMDNASKYALLAFQQHFIRHGGHLIDCQVLNSHTASLGVSEIPRVRFLQQLSQWQDIAVEEGCWLPQQLAEPAF.

Belongs to the L/F-transferase family.

It is found in the cytoplasm. It catalyses the reaction N-terminal L-lysyl-[protein] + L-leucyl-tRNA(Leu) = N-terminal L-leucyl-L-lysyl-[protein] + tRNA(Leu) + H(+). It carries out the reaction N-terminal L-arginyl-[protein] + L-leucyl-tRNA(Leu) = N-terminal L-leucyl-L-arginyl-[protein] + tRNA(Leu) + H(+). The catalysed reaction is L-phenylalanyl-tRNA(Phe) + an N-terminal L-alpha-aminoacyl-[protein] = an N-terminal L-phenylalanyl-L-alpha-aminoacyl-[protein] + tRNA(Phe). Functionally, functions in the N-end rule pathway of protein degradation where it conjugates Leu, Phe and, less efficiently, Met from aminoacyl-tRNAs to the N-termini of proteins containing an N-terminal arginine or lysine. The polypeptide is Leucyl/phenylalanyl-tRNA--protein transferase (Pectobacterium atrosepticum (strain SCRI 1043 / ATCC BAA-672) (Erwinia carotovora subsp. atroseptica)).